A 154-amino-acid polypeptide reads, in one-letter code: Myoglobin (154 aa).

In terms of domain architecture, Globin spans 2-148 (GLSDQEWQQV…FRNDMASKYK (147 aa)). Nitrite is bound at residue H65. H65 contacts O2. H94 contacts heme b.

The protein belongs to the globin family. Monomeric.

It is found in the cytoplasm. It localises to the sarcoplasm. The enzyme catalyses Fe(III)-heme b-[protein] + nitric oxide + H2O = Fe(II)-heme b-[protein] + nitrite + 2 H(+). It carries out the reaction H2O2 + AH2 = A + 2 H2O. Monomeric heme protein which primary function is to store oxygen and facilitate its diffusion within muscle tissues. Reversibly binds oxygen through a pentacoordinated heme iron and enables its timely and efficient release as needed during periods of heightened demand. Depending on the oxidative conditions of tissues and cells, and in addition to its ability to bind oxygen, it also has a nitrite reductase activity whereby it regulates the production of bioactive nitric oxide. Under stress conditions, like hypoxia and anoxia, it also protects cells against reactive oxygen species thanks to its pseudoperoxidase activity. The protein is Myoglobin (MB) of Aethia pygmaea (Whiskered auklet).